A 676-amino-acid polypeptide reads, in one-letter code: DNA ligase (676 aa).

NAD(+)-binding positions include 32-36, 81-82, and Glu-113; these read DAEYD and SL. The active-site N6-AMP-lysine intermediate is Lys-115. 4 residues coordinate NAD(+): Arg-136, Glu-173, Lys-291, and Lys-315. Zn(2+) is bound by residues Cys-409, Cys-412, Cys-427, and Cys-433. The region spanning 595–676 is the BRCT domain; that stretch reads SEKTYFFNKK…LNSLIRIKEQ (82 aa).

This sequence belongs to the NAD-dependent DNA ligase family. LigA subfamily. Mg(2+) serves as cofactor. Mn(2+) is required as a cofactor.

It catalyses the reaction NAD(+) + (deoxyribonucleotide)n-3'-hydroxyl + 5'-phospho-(deoxyribonucleotide)m = (deoxyribonucleotide)n+m + AMP + beta-nicotinamide D-nucleotide.. In terms of biological role, DNA ligase that catalyzes the formation of phosphodiester linkages between 5'-phosphoryl and 3'-hydroxyl groups in double-stranded DNA using NAD as a coenzyme and as the energy source for the reaction. It is essential for DNA replication and repair of damaged DNA. The sequence is that of DNA ligase from Buchnera aphidicola subsp. Acyrthosiphon pisum (strain Tuc7).